The sequence spans 674 residues: Probable copper-transporting P-type ATPase B (674 aa).

The disordered stretch occupies residues 1 to 20 (MNHSNHMHHDNHESHHHYSG). 6 helical membrane-spanning segments follow: residues 32-52 (FFVS…MGVN), 57-77 (FTFP…FFYG), 95-115 (GMMT…LYAF), 127-147 (TMDF…GHWI), 284-304 (GYLF…WMLI), and 315-335 (LVTV…PLVT). Residue Asp367 is the 4-aspartylphosphate intermediate of the active site. Mg(2+) is bound by residues Asp565 and Asp569. The next 2 helical transmembrane spans lie at 623 to 645 (LWWG…AFIG) and 649 to 671 (SPAV…AFTL).

Belongs to the cation transport ATPase (P-type) (TC 3.A.3) family. Type IB subfamily.

It is found in the cell membrane. The catalysed reaction is Cu(+)(in) + ATP + H2O = Cu(+)(out) + ADP + phosphate + H(+). Involved in copper transport. The protein is Probable copper-transporting P-type ATPase B (copB) of Staphylococcus haemolyticus (strain JCSC1435).